The sequence spans 94 residues: VCCRGLLGAASVGRQNRFEIVYNLLSLREVWDMFGVFFFNHPDLRILTDYGFEGHPFRKYDDEVKRVVAEPVELAQEFRKFDLNSPWEAFPAYR.

This sequence belongs to the complex I 30 kDa subunit family. Core subunit of respiratory chain NADH dehydrogenase (Complex I) which is composed of 45 different subunits. Interacts with NDUFAF3. Interacts with RAB5IF. Found in subcomplexes containing subunits NDUFS2, MT-ND1 and NDUFA13.

The protein resides in the mitochondrion inner membrane. It carries out the reaction a ubiquinone + NADH + 5 H(+)(in) = a ubiquinol + NAD(+) + 4 H(+)(out). Functionally, core subunit of the mitochondrial membrane respiratory chain NADH dehydrogenase (Complex I) which catalyzes electron transfer from NADH through the respiratory chain, using ubiquinone as an electron acceptor. Essential for the catalytic activity and assembly of complex I. The sequence is that of NADH dehydrogenase [ubiquinone] iron-sulfur protein 3, mitochondrial from Mesocricetus auratus (Golden hamster).